The chain runs to 279 residues: MPIPLLSFPLTTQNQRVEGYEVPNEDTPTIYRLTDTSSDTEIDAIIWAAYRQIFSEHLILETYRQPYLESQLRNRAINVRDFIRGLGKSEVYRQEVAQTNSNYRLVDISFKRFLGRATYGKSEQIAWSIVIATQGLHGFIDALVDSEEYRQNFGDDIVPFQRRRFKDRPFNLVNPRYADYWRNRLLEQFLGGQSFYRVVRAGESGKRGVAGAIPSTFLSMAASIAPSGISYQRTADSARTFISTVKLPETTSESKTPPPTVKPATVALPYRYIPGNKTT.

The 179-residue stretch at 11–189 (TTQNQRVEGY…YWRNRLLEQF (179 aa)) folds into the PBS-linker domain.

Belongs to the phycobilisome linker protein family. As to quaternary structure, the phycobilisome is a hemidiscoidal structure that is composed of two distinct substructures: a core complex and a number of rods radiating from the core.

It localises to the cellular thylakoid membrane. Functionally, rod-core linker protein required for attachment of phycocyanin to allophycocyanin in cores of phycobilisomes. Its function is as follows. Linker polypeptides determine the state of aggregation and the location of the disk-shaped phycobiliprotein units within the phycobilisome and modulate their spectroscopic properties in order to mediate a directed and optimal energy transfer. The polypeptide is Phycobilisome rod-core linker polypeptide CpcG1 (cpcG1) (Mastigocladus laminosus (Fischerella sp.)).